Here is a 196-residue protein sequence, read N- to C-terminus: Holliday junction branch migration complex subunit RuvA (196 aa).

The tract at residues 1-63 is domain I; it reads MINKIYGKII…EDEIKLFGFL (63 aa). A domain II region spans residues 64–138; sequence NVSEREVFEE…GKLVKADELT (75 aa). Position 138 (T138) is a region of interest, flexible linker. The domain III stretch occupies residues 139–196; that stretch reads SSVFKFKDLEQSIVNMGFDRKLVVAAIKEIMLIDEFLMLREVEQEQFLFRETLKRLSG.

It belongs to the RuvA family. As to quaternary structure, homotetramer. Forms an RuvA(8)-RuvB(12)-Holliday junction (HJ) complex. HJ DNA is sandwiched between 2 RuvA tetramers; dsDNA enters through RuvA and exits via RuvB. An RuvB hexamer assembles on each DNA strand where it exits the tetramer. Each RuvB hexamer is contacted by two RuvA subunits (via domain III) on 2 adjacent RuvB subunits; this complex drives branch migration. In the full resolvosome a probable DNA-RuvA(4)-RuvB(12)-RuvC(2) complex forms which resolves the HJ.

It localises to the cytoplasm. In terms of biological role, the RuvA-RuvB-RuvC complex processes Holliday junction (HJ) DNA during genetic recombination and DNA repair, while the RuvA-RuvB complex plays an important role in the rescue of blocked DNA replication forks via replication fork reversal (RFR). RuvA specifically binds to HJ cruciform DNA, conferring on it an open structure. The RuvB hexamer acts as an ATP-dependent pump, pulling dsDNA into and through the RuvAB complex. HJ branch migration allows RuvC to scan DNA until it finds its consensus sequence, where it cleaves and resolves the cruciform DNA. This is Holliday junction branch migration complex subunit RuvA from Borrelia hermsii (strain HS1 / DAH).